The chain runs to 119 residues: Large ribosomal subunit protein uL18 (119 aa).

Belongs to the universal ribosomal protein uL18 family. In terms of assembly, part of the 50S ribosomal subunit; part of the 5S rRNA/L5/L18/L25 subcomplex. Contacts the 5S and 23S rRNAs.

This is one of the proteins that bind and probably mediate the attachment of the 5S RNA into the large ribosomal subunit, where it forms part of the central protuberance. This Lactobacillus johnsonii (strain CNCM I-12250 / La1 / NCC 533) protein is Large ribosomal subunit protein uL18.